The primary structure comprises 89 residues: Neuropeptide S (89 aa).

The first 23 residues, 1-23 (MISSVKLNLILVLSLSTMHVFWC), serve as a signal peptide directing secretion. Positions 24–67 (YPVPSSKVSGKSDYFLILLNSCPTRLDRSKELAFLKPILEKMFV) are excised as a propeptide.

It is found in the secreted. In terms of biological role, modulates arousal and anxiety. May play an important anorexigenic role. Binds to its receptor NPSR1 with nanomolar affinity to increase intracellular calcium concentrations. The sequence is that of Neuropeptide S (NPS) from Homo sapiens (Human).